We begin with the raw amino-acid sequence, 102 residues long: Nuclear protein 2 (102 aa).

Disordered regions lie at residues 1–26 (MDPP…ALPT) and 46–102 (PASG…TRLA). The segment covering 85-102 (QRKRRQRQLQPRPRTRLA) has biased composition (basic residues).

This sequence belongs to the NUPR family.

The protein localises to the nucleus. Functionally, acts as a transcriptional repressor by inhibiting gene expression at the NUPR1 promoter in a p53/TP53-dependent manner in cancer cells. Involved in the G1 cell cycle arrest, and in a decrease in cell viability and cell proliferation of pancreatic cancer cells. Plays a role as a negative regulator of the protumoral factor NUPR1. This Mus musculus (Mouse) protein is Nuclear protein 2.